Here is a 185-residue protein sequence, read N- to C-terminus: Ribosome-recycling factor (185 aa).

This sequence belongs to the RRF family.

The protein resides in the cytoplasm. Its function is as follows. Responsible for the release of ribosomes from messenger RNA at the termination of protein biosynthesis. May increase the efficiency of translation by recycling ribosomes from one round of translation to another. The sequence is that of Ribosome-recycling factor from Pseudomonas savastanoi pv. phaseolicola (strain 1448A / Race 6) (Pseudomonas syringae pv. phaseolicola (strain 1448A / Race 6)).